A 378-amino-acid polypeptide reads, in one-letter code: 1-acyl-sn-glycerol-3-phosphate acyltransferase delta (378 aa).

A helical transmembrane segment spans residues 11–31 (FLCHLVFCYVFIASGLIINTI). Positions 96 to 101 (HKFEID) match the HXXXXD motif motif. A run of 3 helical transmembrane segments spans residues 125 to 145 (ELAYVPIIGWMWYFTEMVFCS), 307 to 327 (TLVNWLFWASLVLYPFFQFLV), and 338 to 358 (LASFILVFFVASVGVRWMIGV).

This sequence belongs to the 1-acyl-sn-glycerol-3-phosphate acyltransferase family. In terms of tissue distribution, widely expressed with highest levels in skeletal muscle, followed by heart, liver, prostate and thymus.

Its subcellular location is the endoplasmic reticulum membrane. The enzyme catalyses a 1-acyl-sn-glycero-3-phosphate + an acyl-CoA = a 1,2-diacyl-sn-glycero-3-phosphate + CoA. It catalyses the reaction (4Z,7Z,10Z,13Z,16Z,19Z)-docosahexaenoyl-CoA + 1-hexadecanoyl-sn-glycero-3-phosphate = 1-hexadecanoyl-2-(4Z,7Z,10Z,13Z,16Z,19Z-docosahexaenoyl)-sn-glycero-3-phosphate + CoA. It carries out the reaction 1-octadecanoyl-sn-glycero-3-phosphate + (9Z,12Z)-octadecadienoyl-CoA = 1-octadecanoyl-2-(9Z,12Z-octadecadienoyl)-sn-glycero-3-phosphate + CoA. The catalysed reaction is 1-octadecanoyl-sn-glycero-3-phosphate + (4Z,7Z,10Z,13Z,16Z,19Z)-docosahexaenoyl-CoA = 1-octadecanoyl-2-(4Z,7Z,10Z,13Z,16Z,19Z-docosahexaenoyl)-sn-glycero-3-phosphate + CoA. The enzyme catalyses (4Z,7Z,10Z,13Z,16Z,19Z)-docosahexaenoyl-CoA + 1-(9Z-octadecenoyl)-sn-glycero-3-phosphate = 1-(9Z-octadecenoyl)-2-(4Z,7Z,10Z,13Z,16Z,19Z-docosahexaenoyl)-sn-glycero-3-phosphate + CoA. The protein operates within phospholipid metabolism; CDP-diacylglycerol biosynthesis; CDP-diacylglycerol from sn-glycerol 3-phosphate: step 2/3. Its function is as follows. Converts 1-acyl-sn-glycerol-3-phosphate (lysophosphatidic acid or LPA) into 1,2-diacyl-sn-glycerol-3-phosphate (phosphatidic acid or PA) by incorporating an acyl moiety at the sn-2 position of the glycerol backbone. Exhibits high acyl-CoA specificity for polyunsaturated fatty acyl-CoA, especially docosahexaenoyl-CoA (22:6-CoA, DHA-CoA). The polypeptide is 1-acyl-sn-glycerol-3-phosphate acyltransferase delta (AGPAT4) (Homo sapiens (Human)).